The following is a 207-amino-acid chain: Thaumatin-like protein 1 (207 aa).

Cystine bridges form between Cys-9-Cys-202, Cys-50-Cys-60, Cys-65-Cys-71, Cys-117-Cys-191, Cys-122-Cys-174, Cys-130-Cys-140, Cys-144-Cys-153, and Cys-154-Cys-161.

The protein belongs to the thaumatin family. As to quaternary structure, monomer. Post-translationally, not glycosylated.

The protein localises to the secreted. Acidic thaumatin-like protein. Exhibits weak beta-1,3-glucanase activity with laminarin as substrate. This Manilkara zapota (Sapodilla plum) protein is Thaumatin-like protein 1 (TLP1).